We begin with the raw amino-acid sequence, 135 residues long: Large-conductance mechanosensitive channel (135 aa).

The next 2 membrane-spanning stretches (helical) occupy residues 10 to 30 and 76 to 96; these read FAMR…AAFG and GVFI…FLAI.

Belongs to the MscL family. In terms of assembly, homopentamer.

It localises to the cell inner membrane. Channel that opens in response to stretch forces in the membrane lipid bilayer. May participate in the regulation of osmotic pressure changes within the cell. This Cronobacter sakazakii (strain ATCC BAA-894) (Enterobacter sakazakii) protein is Large-conductance mechanosensitive channel.